The following is a 120-amino-acid chain: Protein EPIDERMAL PATTERNING FACTOR 2 (120 aa).

The N-terminal stretch at 1 to 25 (MTKFVRKYMFCLVLVFAACSLVVNS) is a signal peptide. 4 disulfides stabilise this stretch: Cys-76–Cys-107, Cys-80–Cys-86, Cys-83–Cys-109, and Cys-95–Cys-101.

Belongs to the plant cysteine rich small secretory peptide family. Epidermal patterning factor subfamily. Interacts with ERECTA, ERL1 and TMM. In terms of tissue distribution, expressed in leaves, especially by the MMCs and their early descendants cells (stomatal lineage cells) including guard mother cells (GMCs).

The protein localises to the secreted. In terms of biological role, controls stomatal patterning. Regulates the number of cells that enter, and remain in, the stomatal lineage by inhibiting protodermal cells from adopting the meristemoid mother cell (MMC) fate in a non-cell-autonomous manner. Mediates stomatal development inhibition. MEPF2: mobile signal controlling stomatal development in a non-cell-autonomous manner. Uses ERECTA as major receptor. Inactivated by cleavage by CRSP (AC Q9LNU1). May act by competing with somatogen (AC Q9SV72) for the same receptor, TMM (AC Q9SSD1). The polypeptide is Protein EPIDERMAL PATTERNING FACTOR 2 (Arabidopsis thaliana (Mouse-ear cress)).